A 190-amino-acid chain; its full sequence is Large ribosomal subunit protein uL5 (190 aa).

The protein belongs to the universal ribosomal protein uL5 family. Part of the 50S ribosomal subunit; part of the 5S rRNA/L5/L18/L25 subcomplex. Contacts the 5S rRNA and the P site tRNA. Forms a bridge to the 30S subunit in the 70S ribosome.

This is one of the proteins that bind and probably mediate the attachment of the 5S RNA into the large ribosomal subunit, where it forms part of the central protuberance. In the 70S ribosome it contacts protein S13 of the 30S subunit (bridge B1b), connecting the 2 subunits; this bridge is implicated in subunit movement. Contacts the P site tRNA; the 5S rRNA and some of its associated proteins might help stabilize positioning of ribosome-bound tRNAs. This is Large ribosomal subunit protein uL5 from Bifidobacterium adolescentis (strain ATCC 15703 / DSM 20083 / NCTC 11814 / E194a).